Reading from the N-terminus, the 553-residue chain is Cytokine-like nuclear factor N-PAC (553 aa).

The PWWP domain maps to 8-66 (LGDLVWGKLGRYPPWPGKIVNPPKDLKKPRGKKCFFVKFFGTEDHAWIKVEQLKPYHAH). 2 stretches are compositionally biased toward basic and acidic residues: residues 92–145 (RAKG…EGKK) and 162–182 (RAQE…KDLT). The segment at 92–188 (RAKGKDQTSS…KDLTIPESST (97 aa)) is disordered. Phosphoserine is present on Ser-130. Residue Lys-135 forms a Glycyl lysine isopeptide (Lys-Gly) (interchain with G-Cter in SUMO2) linkage. Ser-167 carries the phosphoserine modification. A DNA-binding region (a.T hook) is located at residues 168–180 (PRKRGRPPKDEKD). Glycyl lysine isopeptide (Lys-Gly) (interchain with G-Cter in SUMO2) cross-links involve residues Lys-176, Lys-179, Lys-201, and Lys-211. The interval 214–217 (DPHF) is interaction with histone H3. The tract at residues 216–225 (HFHHFLLSQT) is interaction with KDM1B. Residues Lys-227, Lys-237, Lys-240, and Lys-269 each participate in a glycyl lysine isopeptide (Lys-Gly) (interchain with G-Cter in SUMO2) cross-link. The segment at 261–553 (GSITPTDKKI…MSAVYRAYIH (293 aa)) is dehydrogenase domain. 271-285 (GFLGLGLMGSGIVSN) is a binding site for NAD(+). A Glycyl lysine isopeptide (Lys-Gly) (interchain with G-Cter in SUMO2) cross-link involves residue Lys-302. NAD(+)-binding residues include Thr-362 and Lys-505. Ser-540 bears the Phosphoserine mark.

This sequence belongs to the HIBADH-related family. NP60 subfamily. As to quaternary structure, homotetramere. Interacts with MAPK14. Interacts with KDM1B at nucleosomes; this interaction stimulates H3K4me1 and H3K4me2 demethylation. Binds to mononucleosomes. Interacts with GATA4; the interaction is required for a synergistic activation of GATA4 target genes transcription.

Its subcellular location is the nucleus. The protein resides in the chromosome. Functionally, cytokine-like nuclear factor with chromatin gene reader activity involved in chromatin modification and regulation of gene expression. Acts as a nucleosome-destabilizing factor that is recruited to genes during transcriptional activation. Recognizes and binds histone H3 without a preference for specific epigenetic markers and also binds DNA. Interacts with KDM1B and promotes its histone demethylase activity by facilitating the capture of H3 tails, they form a multifunctional enzyme complex that modifies transcribed chromatin and facilitates Pol II transcription through nucleosomes. Stimulates the acetylation of 'Lys-56' of nucleosomal histone H3 (H3K56ac) by EP300. With GATA4, co-binds a defined set of heart development genes and coregulates their expression during cardiomyocyte differentiation. Regulates p38 MAP kinase activity by mediating stress activation of MAPK14/p38alpha and specifically regulating MAPK14 signaling. Indirectly promotes phosphorylation of MAPK14 and activation of ATF2. The phosphorylation of MAPK14 requires upstream activity of MAP2K4 and MAP2K6. This Homo sapiens (Human) protein is Cytokine-like nuclear factor N-PAC.